A 259-amino-acid chain; its full sequence is Deoxyribose-phosphate aldolase (259 aa).

D102 functions as the Proton donor/acceptor in the catalytic mechanism. K167 functions as the Schiff-base intermediate with acetaldehyde in the catalytic mechanism. Residue K201 is the Proton donor/acceptor of the active site.

It belongs to the DeoC/FbaB aldolase family. DeoC type 2 subfamily.

The protein localises to the cytoplasm. It catalyses the reaction 2-deoxy-D-ribose 5-phosphate = D-glyceraldehyde 3-phosphate + acetaldehyde. It participates in carbohydrate degradation; 2-deoxy-D-ribose 1-phosphate degradation; D-glyceraldehyde 3-phosphate and acetaldehyde from 2-deoxy-alpha-D-ribose 1-phosphate: step 2/2. Catalyzes a reversible aldol reaction between acetaldehyde and D-glyceraldehyde 3-phosphate to generate 2-deoxy-D-ribose 5-phosphate. This Photorhabdus laumondii subsp. laumondii (strain DSM 15139 / CIP 105565 / TT01) (Photorhabdus luminescens subsp. laumondii) protein is Deoxyribose-phosphate aldolase.